Reading from the N-terminus, the 944-residue chain is Isoleucine--tRNA ligase (944 aa).

Positions P58–H68 match the 'HIGH' region motif. Residue E563 participates in L-isoleucyl-5'-AMP binding. The short motif at K604–S608 is the 'KMSKS' region element. K607 contacts ATP. C907, C910, C927, and C930 together coordinate Zn(2+).

The protein belongs to the class-I aminoacyl-tRNA synthetase family. IleS type 1 subfamily. Monomer. Zn(2+) serves as cofactor.

Its subcellular location is the cytoplasm. It carries out the reaction tRNA(Ile) + L-isoleucine + ATP = L-isoleucyl-tRNA(Ile) + AMP + diphosphate. Catalyzes the attachment of isoleucine to tRNA(Ile). As IleRS can inadvertently accommodate and process structurally similar amino acids such as valine, to avoid such errors it has two additional distinct tRNA(Ile)-dependent editing activities. One activity is designated as 'pretransfer' editing and involves the hydrolysis of activated Val-AMP. The other activity is designated 'posttransfer' editing and involves deacylation of mischarged Val-tRNA(Ile). In Salmonella typhimurium (strain LT2 / SGSC1412 / ATCC 700720), this protein is Isoleucine--tRNA ligase.